The chain runs to 413 residues: Imidazolonepropionase (413 aa).

Fe(3+) is bound by residues histidine 70 and histidine 72. Positions 70 and 72 each coordinate Zn(2+). 4-imidazolone-5-propanoate contacts are provided by arginine 79, tyrosine 142, and histidine 175. Tyrosine 142 contacts N-formimidoyl-L-glutamate. Histidine 240 lines the Fe(3+) pocket. Zn(2+) is bound at residue histidine 240. Residue glutamate 243 coordinates 4-imidazolone-5-propanoate. Aspartate 315 lines the Fe(3+) pocket. Aspartate 315 contributes to the Zn(2+) binding site. N-formimidoyl-L-glutamate-binding residues include asparagine 317 and glycine 319. Serine 320 contributes to the 4-imidazolone-5-propanoate binding site.

The protein belongs to the metallo-dependent hydrolases superfamily. HutI family. Zn(2+) is required as a cofactor. It depends on Fe(3+) as a cofactor.

It is found in the cytoplasm. The catalysed reaction is 4-imidazolone-5-propanoate + H2O = N-formimidoyl-L-glutamate. It functions in the pathway amino-acid degradation; L-histidine degradation into L-glutamate; N-formimidoyl-L-glutamate from L-histidine: step 3/3. In terms of biological role, catalyzes the hydrolytic cleavage of the carbon-nitrogen bond in imidazolone-5-propanoate to yield N-formimidoyl-L-glutamate. It is the third step in the universal histidine degradation pathway. This Treponema denticola (strain ATCC 35405 / DSM 14222 / CIP 103919 / JCM 8153 / KCTC 15104) protein is Imidazolonepropionase.